The chain runs to 64 residues: Conotoxin Mr3.5 (64 aa).

The signal sequence occupies residues 1–19 (MSKLGVLLTICLLLFPLTA). Residues 20–46 (LPLDGDQPADQRAERTQAEKHSLPDPR) constitute a propeptide that is removed on maturation. 3 cysteine pairs are disulfide-bonded: C49-C58, C50-C62, and C54-C63. C63 carries the cysteine amide modification.

It belongs to the conotoxin M superfamily. As to expression, expressed by the venom duct.

The protein localises to the secreted. This is Conotoxin Mr3.5 from Conus marmoreus (Marble cone).